A 308-amino-acid chain; its full sequence is uncharacterized protein (308 aa).

This is an uncharacterized protein from Methanocaldococcus jannaschii (strain ATCC 43067 / DSM 2661 / JAL-1 / JCM 10045 / NBRC 100440) (Methanococcus jannaschii).